Consider the following 261-residue polypeptide: Ribosomal RNA small subunit methyltransferase A (261 aa).

Positions 12, 14, 39, 60, 81, and 104 each coordinate S-adenosyl-L-methionine.

The protein belongs to the class I-like SAM-binding methyltransferase superfamily. rRNA adenine N(6)-methyltransferase family. RsmA subfamily.

It localises to the cytoplasm. It carries out the reaction adenosine(1518)/adenosine(1519) in 16S rRNA + 4 S-adenosyl-L-methionine = N(6)-dimethyladenosine(1518)/N(6)-dimethyladenosine(1519) in 16S rRNA + 4 S-adenosyl-L-homocysteine + 4 H(+). In terms of biological role, specifically dimethylates two adjacent adenosines (A1518 and A1519) in the loop of a conserved hairpin near the 3'-end of 16S rRNA in the 30S particle. May play a critical role in biogenesis of 30S subunits. The chain is Ribosomal RNA small subunit methyltransferase A from Albidiferax ferrireducens (strain ATCC BAA-621 / DSM 15236 / T118) (Rhodoferax ferrireducens).